The sequence spans 591 residues: Aspartate--tRNA(Asp/Asn) ligase (591 aa).

Glu176 is an L-aspartate binding site. An aspartate region spans residues Gln200–Lys203. Residue Arg222 coordinates L-aspartate. Residues Arg222–Glu224 and Gln231 contribute to the ATP site. His450 contributes to the L-aspartate binding site. Glu484 contributes to the ATP binding site. Residue Arg491 coordinates L-aspartate. Position 536-539 (Gly536–Arg539) interacts with ATP.

The protein belongs to the class-II aminoacyl-tRNA synthetase family. Type 1 subfamily. In terms of assembly, homodimer.

It localises to the cytoplasm. The enzyme catalyses tRNA(Asx) + L-aspartate + ATP = L-aspartyl-tRNA(Asx) + AMP + diphosphate. Functionally, aspartyl-tRNA synthetase with relaxed tRNA specificity since it is able to aspartylate not only its cognate tRNA(Asp) but also tRNA(Asn). Reaction proceeds in two steps: L-aspartate is first activated by ATP to form Asp-AMP and then transferred to the acceptor end of tRNA(Asp/Asn). The protein is Aspartate--tRNA(Asp/Asn) ligase of Bacillus mycoides (strain KBAB4) (Bacillus weihenstephanensis).